An 81-amino-acid chain; its full sequence is ATP synthase subunit c (81 aa).

The next 2 membrane-spanning stretches (helical) occupy residues 7–27 (AASV…PGIG) and 57–77 (LAFM…LLFA).

Belongs to the ATPase C chain family. F-type ATPases have 2 components, F(1) - the catalytic core - and F(0) - the membrane proton channel. F(1) has five subunits: alpha(3), beta(3), gamma(1), delta(1), epsilon(1). F(0) has four main subunits: a(1), b(1), b'(1) and c(10-14). The alpha and beta chains form an alternating ring which encloses part of the gamma chain. F(1) is attached to F(0) by a central stalk formed by the gamma and epsilon chains, while a peripheral stalk is formed by the delta, b and b' chains.

The protein resides in the cellular thylakoid membrane. Its function is as follows. F(1)F(0) ATP synthase produces ATP from ADP in the presence of a proton or sodium gradient. F-type ATPases consist of two structural domains, F(1) containing the extramembraneous catalytic core and F(0) containing the membrane proton channel, linked together by a central stalk and a peripheral stalk. During catalysis, ATP synthesis in the catalytic domain of F(1) is coupled via a rotary mechanism of the central stalk subunits to proton translocation. Key component of the F(0) channel; it plays a direct role in translocation across the membrane. A homomeric c-ring of between 10-14 subunits forms the central stalk rotor element with the F(1) delta and epsilon subunits. This chain is ATP synthase subunit c, found in Nostoc sp. (strain PCC 7120 / SAG 25.82 / UTEX 2576).